A 525-amino-acid chain; its full sequence is MTENIHKHRILILDFGSQYTQLVARRVRELGVYCELWAWDVTEAQIREFNPSGIILSGGPESTTEENSPRAPQYVFEAGVPVFGVCYGMQTMAMQLGGHVEGSNEREFGYAQVEVVNDSALVRGIEDSLTADGKPLLDVWMSHGDKVTAIPADFVTVASTDNCPFAIMANEEKRFYGVQFHPEVTHTRQGMRMLERFVRDICQCEALWTPAKIIDDAVERIRQQVGDDKVILGLSGGVDSSVTAMLLHRAIGKNLTCVFVDNGLLRLNEAQQVMEMFGDHFGLNIVHVEGEQRFLDALAGESDPEAKRKIIGRVFVEVFDEEALKLDDVKWLAQGTIYPDVIESAASATGKAHVIKSHHNVGGLPKEMKMGLVEPLRELFKDEVRKIGLELGLPYDMLYRHPFPGPGLGVRVLGEVKKEYCDLLRRADAIFIEELHKADLYNKVSQAFTVFLPVRSVGVMGDGRKYDWVVSLRAVETIDFMTAHWAHLPYDFLGRVSNRIINEVNGISRVVYDISGKPPATIEWE.

The Glutamine amidotransferase type-1 domain maps to 9–207 (RILILDFGSQ…VRDICQCEAL (199 aa)). Catalysis depends on C86, which acts as the Nucleophile. Catalysis depends on residues H181 and E183. A GMPS ATP-PPase domain is found at 208–400 (WTPAKIIDDA…LGLPYDMLYR (193 aa)). 235–241 (SGGVDSS) is a binding site for ATP.

Homodimer.

It catalyses the reaction XMP + L-glutamine + ATP + H2O = GMP + L-glutamate + AMP + diphosphate + 2 H(+). It participates in purine metabolism; GMP biosynthesis; GMP from XMP (L-Gln route): step 1/1. Functionally, catalyzes the synthesis of GMP from XMP. This is GMP synthase [glutamine-hydrolyzing] from Klebsiella pneumoniae subsp. pneumoniae (strain ATCC 700721 / MGH 78578).